The chain runs to 481 residues: Rhamnogalacturonan I rhamnosyltransferase 4 (481 aa).

The chain crosses the membrane as a helical; Signal-anchor for type II membrane protein span at residues 33–55 (VWFFRVCSCILVWTCLIQLFWHS). 2 N-linked (GlcNAc...) asparagine glycosylation sites follow: asparagine 85 and asparagine 118. 258–260 (HLR) provides a ligand contact to substrate. N-linked (GlcNAc...) asparagine glycans are attached at residues asparagine 372 and asparagine 432.

It belongs to the glycosyltransferase GT106 family.

Its subcellular location is the golgi apparatus membrane. It carries out the reaction alpha-D-galacturonosyl-[(1-&gt;2)-alpha-L-rhamnosyl-(1-&gt;4)-alpha-D-galacturonosyl](n) + UDP-beta-L-rhamnose = [(1-&gt;2)-alpha-L-rhamnosyl-(1-&gt;4)-alpha-D-galacturonosyl](n+1) + UDP + H(+). The protein operates within glycan metabolism; pectin biosynthesis. Its function is as follows. Glycosyltransferase involved in the formation of rhamnogalacturonan I (RG-I) oligosaccharides in the seed coat mucilage, which is a specialized cell wall with abundant RG-I. Transfers the rhamnose residue from UDP-beta-L-rhamnose to RG-I oligosaccharides. This chain is Rhamnogalacturonan I rhamnosyltransferase 4, found in Arabidopsis thaliana (Mouse-ear cress).